Consider the following 1062-residue polypeptide: Carbamoyl phosphate synthase pyrimidine-specific large chain (1062 aa).

The carboxyphosphate synthetic domain stretch occupies residues 1–401; sequence MGKREDIKKI…SLLKAVRSLE (401 aa). Residues arginine 129, arginine 169, glycine 175, glycine 176, lysine 208, isoleucine 210, glutamate 215, glycine 241, valine 242, histidine 243, glutamine 284, and glutamate 298 each coordinate ATP. The ATP-grasp 1 domain maps to 133–327; it reads RALMKELNEP…IAKIAAKIAV (195 aa). Glutamine 284, glutamate 298, and asparagine 300 together coordinate Mg(2+). The Mn(2+) site is built by glutamine 284, glutamate 298, and asparagine 300. The segment at 402–546 is oligomerization domain; it reads AGVYHLDQPD…YGTYEEENES (145 aa). Positions 547 to 929 are carbamoyl phosphate synthetic domain; sequence ERTDKKSILV…ALYKGLIASG (383 aa). Residues 671 to 861 enclose the ATP-grasp 2 domain; sequence EQTLVELNIP…MANVATKVML (191 aa). Residues arginine 707, arginine 746, leucine 748, glutamate 752, glycine 777, valine 778, histidine 779, serine 780, glutamine 820, and glutamate 832 each contribute to the ATP site. Mg(2+) contacts are provided by glutamine 820, glutamate 832, and asparagine 834. Glutamine 820, glutamate 832, and asparagine 834 together coordinate Mn(2+). In terms of domain architecture, MGS-like spans 930 to 1062; the sequence is MSIPTHGSVL…FSAESMPVMQ (133 aa). Residues 930 to 1062 form an allosteric domain region; sequence MSIPTHGSVL…FSAESMPVMQ (133 aa).

This sequence belongs to the CarB family. In terms of assembly, composed of two chains; the small (or glutamine) chain promotes the hydrolysis of glutamine to ammonia, which is used by the large (or ammonia) chain to synthesize carbamoyl phosphate. Tetramer of heterodimers (alpha,beta)4. Requires Mg(2+) as cofactor. Mn(2+) is required as a cofactor.

It catalyses the reaction hydrogencarbonate + L-glutamine + 2 ATP + H2O = carbamoyl phosphate + L-glutamate + 2 ADP + phosphate + 2 H(+). It carries out the reaction hydrogencarbonate + NH4(+) + 2 ATP = carbamoyl phosphate + 2 ADP + phosphate + 2 H(+). The protein operates within amino-acid biosynthesis; L-arginine biosynthesis; carbamoyl phosphate from bicarbonate: step 1/1. Its pathway is pyrimidine metabolism; UMP biosynthesis via de novo pathway; (S)-dihydroorotate from bicarbonate: step 1/3. In terms of biological role, small subunit of the glutamine-dependent carbamoyl phosphate synthetase (CPSase). CPSase catalyzes the formation of carbamoyl phosphate from the ammonia moiety of glutamine, carbonate, and phosphate donated by ATP, constituting the first step of the biosynthetic pathway leading to pyrimidine nucleotides. The large subunit (synthetase) binds the substrates ammonia (free or transferred from glutamine from the small subunit), hydrogencarbonate and ATP and carries out an ATP-coupled ligase reaction, activating hydrogencarbonate by forming carboxy phosphate which reacts with ammonia to form carbamoyl phosphate. The protein is Carbamoyl phosphate synthase pyrimidine-specific large chain (pyrAB) of Halalkalibacterium halodurans (strain ATCC BAA-125 / DSM 18197 / FERM 7344 / JCM 9153 / C-125) (Bacillus halodurans).